The following is a 607-amino-acid chain: Siderochrome iron transporter 2 (607 aa).

Residues 1–46 are disordered; that stretch reads MGLFGSFGARNKATPQVPPGAVAKAPEGTPKGPETNDQPDMDSSRL. A run of 13 helical transmembrane segments spans residues 86–106, 129–149, 152–172, 180–200, 210–230, 242–262, 297–317, 326–346, 367–387, 404–424, 432–452, 459–479, and 499–519; these read VWAT…QSGI, ILSS…LNLW, AEGF…LAAC, AGYV…DVFV, AFTF…APLA, WAYG…AVVF, IIGA…FSLA, SAAF…FAAW, LGAC…DLYF, YMTQ…GLWV, HTCL…MIHF, IGYV…LVIG, and FIGL…AAIY. N-linked (GlcNAc...) asparagine glycosylation is present at asparagine 538. A helical membrane pass occupies residues 573–593; it reads FGAVAATCILILGIPAIAVWK.

The protein belongs to the major facilitator superfamily.

The protein resides in the cell membrane. Its function is as follows. Major facilitator transporter involved in ferrichrome (FC) uptake. In Aspergillus fumigatus (strain ATCC MYA-4609 / CBS 101355 / FGSC A1100 / Af293) (Neosartorya fumigata), this protein is Siderochrome iron transporter 2.